A 52-amino-acid polypeptide reads, in one-letter code: uncharacterized protein (52 aa).

Positions 24–52 (LRENPSKNVRTIPDAGDENSSFGHARVIA) are disordered.

This is an uncharacterized protein from Treponema pallidum (strain Nichols).